A 514-amino-acid polypeptide reads, in one-letter code: Bifunctional purine biosynthesis protein PurH (514 aa).

Residues 1 to 146 (MPPLALLSTS…KNFAHVTVLC (146 aa)) form the MGS-like domain.

It belongs to the PurH family.

The enzyme catalyses (6R)-10-formyltetrahydrofolate + 5-amino-1-(5-phospho-beta-D-ribosyl)imidazole-4-carboxamide = 5-formamido-1-(5-phospho-D-ribosyl)imidazole-4-carboxamide + (6S)-5,6,7,8-tetrahydrofolate. It carries out the reaction IMP + H2O = 5-formamido-1-(5-phospho-D-ribosyl)imidazole-4-carboxamide. It functions in the pathway purine metabolism; IMP biosynthesis via de novo pathway; 5-formamido-1-(5-phospho-D-ribosyl)imidazole-4-carboxamide from 5-amino-1-(5-phospho-D-ribosyl)imidazole-4-carboxamide (10-formyl THF route): step 1/1. Its pathway is purine metabolism; IMP biosynthesis via de novo pathway; IMP from 5-formamido-1-(5-phospho-D-ribosyl)imidazole-4-carboxamide: step 1/1. The protein is Bifunctional purine biosynthesis protein PurH of Cyanothece sp. (strain PCC 7425 / ATCC 29141).